The primary structure comprises 56 residues: uncharacterized protein (56 aa).

This is an uncharacterized protein from Streptomyces lividans.